We begin with the raw amino-acid sequence, 236 residues long: Small ribosomal subunit protein uS2c (236 aa).

This sequence belongs to the universal ribosomal protein uS2 family.

It is found in the plastid. Its subcellular location is the chloroplast. This Vitis vinifera (Grape) protein is Small ribosomal subunit protein uS2c (rps2).